The chain runs to 456 residues: Exodeoxyribonuclease 7 large subunit (456 aa).

It belongs to the XseA family. In terms of assembly, heterooligomer composed of large and small subunits.

It is found in the cytoplasm. It carries out the reaction Exonucleolytic cleavage in either 5'- to 3'- or 3'- to 5'-direction to yield nucleoside 5'-phosphates.. Bidirectionally degrades single-stranded DNA into large acid-insoluble oligonucleotides, which are then degraded further into small acid-soluble oligonucleotides. The polypeptide is Exodeoxyribonuclease 7 large subunit (Lactobacillus johnsonii (strain CNCM I-12250 / La1 / NCC 533)).